The chain runs to 240 residues: Protein GUCD1 (240 aa).

The chain is Protein GUCD1 (GUCD1) from Homo sapiens (Human).